An 87-amino-acid polypeptide reads, in one-letter code: U3-theraphotoxin-Hhn1f (87 aa).

The signal sequence occupies residues 1-24; sequence MVNMKASMFLTSAGLVLLFVVCYA. Positions 25 to 52 are excised as a propeptide; sequence SESEEKEFPKEMLSSIFAVDNDFKQEER. Disulfide bonds link cysteine 54-cysteine 67, cysteine 61-cysteine 72, and cysteine 66-cysteine 79.

This sequence belongs to the neurotoxin 10 (Hwtx-1) family. 51 (Hntx-8) subfamily. Hntx-8 sub-subfamily. As to expression, expressed by the venom gland.

The protein resides in the secreted. Functionally, ion channel inhibitor. This is U3-theraphotoxin-Hhn1f from Cyriopagopus hainanus (Chinese bird spider).